A 450-amino-acid chain; its full sequence is Tripartite motif-containing protein 64C (450 aa).

The segment at 15-56 (CCICVNYFIDPVTTDCVHSFCRPCLCLCSEEGRAPMRCPLCR) adopts an RING-type zinc-finger fold. The B box-type zinc-finger motif lies at 87–128 (SSDNICVLHEETKELFCEADKRLLCGPCSESPEHMAHSHSPI). Residues Cys92, His95, Cys114, and His120 each coordinate Zn(2+). Residues 191–218 (DEEEQRHLQALEREAKELFQQLQDSQVR) adopt a coiled-coil conformation. Positions 269-450 (ELTSWCITGV…LRPFFCFGCT (182 aa)) constitute a B30.2/SPRY domain.

It belongs to the TRIM/RBCC family.

This is Tripartite motif-containing protein 64C (TRIM64C) from Homo sapiens (Human).